The primary structure comprises 347 residues: Quinolinate synthase (347 aa).

The iminosuccinate site is built by His-47 and Ser-68. Residue Cys-113 participates in [4Fe-4S] cluster binding. Iminosuccinate is bound by residues 139–141 (YAN) and Ser-156. Position 200 (Cys-200) interacts with [4Fe-4S] cluster. Iminosuccinate is bound by residues 226 to 228 (HPE) and Thr-243. Residue Cys-297 coordinates [4Fe-4S] cluster.

It belongs to the quinolinate synthase family. Type 1 subfamily. [4Fe-4S] cluster is required as a cofactor.

The protein resides in the cytoplasm. The catalysed reaction is iminosuccinate + dihydroxyacetone phosphate = quinolinate + phosphate + 2 H2O + H(+). It participates in cofactor biosynthesis; NAD(+) biosynthesis; quinolinate from iminoaspartate: step 1/1. Its function is as follows. Catalyzes the condensation of iminoaspartate with dihydroxyacetone phosphate to form quinolinate. The polypeptide is Quinolinate synthase (Escherichia coli (strain K12 / MC4100 / BW2952)).